A 410-amino-acid chain; its full sequence is Transcription factor PHYTOCHROME INTERACTING FACTOR-LIKE 13 (410 aa).

Residues Ala-82–His-92 are compositionally biased toward low complexity. Disordered stretches follow at residues Ala-82 to Gly-110 and Cys-137 to His-225. Residues Ala-93–Arg-104 are compositionally biased toward pro residues. Basic and acidic residues predominate over residues Gly-187–Asp-197. A compositionally biased stretch (basic residues) spans Ser-209–Thr-219. Residues Arg-220–Arg-233 form a basic motif region. The bHLH domain maps to Arg-220–Leu-269. Residues Asp-234 to Leu-269 form a helix-loop-helix motif region. The disordered stretch occupies residues Pro-357–Ile-410. A compositionally biased stretch (polar residues) spans Gln-380–Ile-410.

It belongs to the bHLH protein family. Interacts with PRR1. Interacts with LF. In terms of tissue distribution, highly expressed in the node portions of the stem. Expressed in the leaves and the basal part of shoots.

Its subcellular location is the nucleus. In terms of biological role, transcription factor that may act as negative regulator of phyB-dependent light signal transduction. Transcription activator that acts as a positive regulator of internode elongation. May function via regulation of cell wall-related genes. May play a role in a drought-associated growth-restriction mechanism in response to drought stress. The polypeptide is Transcription factor PHYTOCHROME INTERACTING FACTOR-LIKE 13 (Oryza sativa subsp. japonica (Rice)).